We begin with the raw amino-acid sequence, 367 residues long: Eukaryotic translation initiation factor 3 subunit H (367 aa).

An MPN domain is found at 14-166 (VQVEALVVMK…LRAFRLSPTF (153 aa)).

Belongs to the eIF-3 subunit H family. In terms of assembly, component of the eukaryotic translation initiation factor 3 (eIF-3) complex.

The protein resides in the cytoplasm. In terms of biological role, component of the eukaryotic translation initiation factor 3 (eIF-3) complex, which is involved in protein synthesis of a specialized repertoire of mRNAs and, together with other initiation factors, stimulates binding of mRNA and methionyl-tRNAi to the 40S ribosome. The eIF-3 complex specifically targets and initiates translation of a subset of mRNAs involved in cell proliferation. This chain is Eukaryotic translation initiation factor 3 subunit H, found in Botryotinia fuckeliana (strain B05.10) (Noble rot fungus).